A 305-amino-acid polypeptide reads, in one-letter code: Ribonucleoside-diphosphate reductase small subunit (305 aa).

Positions 64, 94, and 97 each coordinate Fe cation. The active site involves Y101. Residues 150-170 traverse the membrane as a helical segment; the sequence is VLIFYLIEGVFFISSFYCIGL. Residues E157, E191, and H194 each coordinate Fe cation.

This sequence belongs to the ribonucleoside diphosphate reductase small chain family. As to quaternary structure, heterotetramer composed of a homodimer of the large subunit (R1) and a homodimer of the small subunit (R2). Larger multisubunit protein complex are also active, composed of (R1)n(R2)n. The cofactor is Fe cation.

It is found in the host membrane. The catalysed reaction is a 2'-deoxyribonucleoside 5'-diphosphate + [thioredoxin]-disulfide + H2O = a ribonucleoside 5'-diphosphate + [thioredoxin]-dithiol. Functionally, ribonucleoside-diphosphate reductase holoenzyme provides the precursors necessary for viral DNA synthesis. Allows virus growth in non-dividing cells, as well as reactivation from latency in infected hosts. Catalyzes the biosynthesis of deoxyribonucleotides from the corresponding ribonucleotides. This chain is Ribonucleoside-diphosphate reductase small subunit, found in Alcelaphine herpesvirus 1 (strain C500) (AlHV-1).